A 117-amino-acid chain; its full sequence is Large ribosomal subunit protein uL22c (117 aa).

It belongs to the universal ribosomal protein uL22 family. In terms of assembly, part of the 50S ribosomal subunit.

It localises to the plastid. Its subcellular location is the chloroplast. Its function is as follows. This protein binds specifically to 23S rRNA. In terms of biological role, the globular domain of the protein is located near the polypeptide exit tunnel on the outside of the subunit, while an extended beta-hairpin is found that lines the wall of the exit tunnel in the center of the 70S ribosome. The protein is Large ribosomal subunit protein uL22c (rpl22) of Pyropia yezoensis (Susabi-nori).